A 25-amino-acid polypeptide reads, in one-letter code: Repetitive proline-rich cell wall protein (25 aa).

The disordered stretch occupies residues asparagine 1–proline 25. 4 tandem repeats follow at residues proline 5–lysine 9, proline 10–lysine 14, proline 15–lysine 19, and proline 20–lysine 24. Positions proline 5 to lysine 24 are 4 X 5 AA tandem repeats of P-P-V-[EY]-K. 4-hydroxyproline occurs at positions 6, 11, 16, and 21. Residues glutamate 8–proline 25 are compositionally biased toward pro residues.

The protein belongs to the plant proline-rich protein superfamily. ENOD12 family.

It is found in the secreted. Its subcellular location is the cell wall. The protein is Repetitive proline-rich cell wall protein of Phaseolus vulgaris (Kidney bean).